The chain runs to 569 residues: S-(+)-linalool synthase, chloroplastic (569 aa).

The transit peptide at 1-39 directs the protein to the chloroplast; sequence MALIATKISSRSCFVSAYPNNSPTFLISKFPNTVDSLSP. (2E)-geranyl diphosphate contacts are provided by R294, D331, D335, R472, and D475. The Mg(2+) site is built by D331 and D335. Positions 331–335 match the DDXXD motif motif; it reads DDIFD. Mg(2+) contacts are provided by D475, S479, and E483.

This sequence belongs to the terpene synthase family. Tpsb subfamily. The cofactor is Mg(2+). It depends on Mn(2+) as a cofactor. In terms of tissue distribution, predominantly expressed in flowers but also in stems and siliques.

The protein resides in the plastid. It localises to the chloroplast. It catalyses the reaction (2E)-geranyl diphosphate + H2O = (S)-linalool + diphosphate. It functions in the pathway secondary metabolite biosynthesis; terpenoid biosynthesis. Functionally, involved in monoterpene (C10) biosynthesis. The major product is (S)-linalool. The polypeptide is S-(+)-linalool synthase, chloroplastic (Arabidopsis thaliana (Mouse-ear cress)).